Reading from the N-terminus, the 171-residue chain is Large ribosomal subunit protein uL10 (171 aa).

It belongs to the universal ribosomal protein uL10 family. As to quaternary structure, part of the ribosomal stalk of the 50S ribosomal subunit. The N-terminus interacts with L11 and the large rRNA to form the base of the stalk. The C-terminus forms an elongated spine to which L12 dimers bind in a sequential fashion forming a multimeric L10(L12)X complex.

Its function is as follows. Forms part of the ribosomal stalk, playing a central role in the interaction of the ribosome with GTP-bound translation factors. This is Large ribosomal subunit protein uL10 from Paramagnetospirillum magneticum (strain ATCC 700264 / AMB-1) (Magnetospirillum magneticum).